Consider the following 472-residue polypeptide: MAGKTLYDKLWDSHLVKQRDDGSALIYIDRHIIHEVTSPQAFEGLRLAGRKPWRIDANIATPDHNVPTTPERKGGIEAIADQVSRLQVQTLDDNCDEYGIVEFKMNDVRQGIVHVIGPEQGATLPGMTVVCGDSHTSTHGAFGALAHGIGTSEVEHVLATQCLVAKKMKNMLVRVEGTLPFGVTAKDIVLAVIGKIGTAGGNGHAIEFAGSAIRELSVEGRMTICNMSIEAGARVGLVAADEKTVAYVKGRPFAPKDAEWDLAVEAWKDLVSDADAKFDTVVELDAAQIKPQVSWGTSPEMVLAVDQNVPDPAKEMDLVKRDSIVRALKYMGLSANQAITDIQLDRVFIGSCTNSRIEDLRAAAVIAKGRKVASTIKQAIVVPGSGLVKAQAESEGLDKIFLEAGFEWREPGCSMCLAMNPDRLESGEHCASTSNRNFEGRQGAGGRTHLVSPAMAAAAAVSGRFVDVRELI.

[4Fe-4S] cluster contacts are provided by Cys352, Cys413, and Cys416.

Belongs to the aconitase/IPM isomerase family. LeuC type 1 subfamily. In terms of assembly, heterodimer of LeuC and LeuD. The cofactor is [4Fe-4S] cluster.

The enzyme catalyses (2R,3S)-3-isopropylmalate = (2S)-2-isopropylmalate. It participates in amino-acid biosynthesis; L-leucine biosynthesis; L-leucine from 3-methyl-2-oxobutanoate: step 2/4. Catalyzes the isomerization between 2-isopropylmalate and 3-isopropylmalate, via the formation of 2-isopropylmaleate. The chain is 3-isopropylmalate dehydratase large subunit from Pseudomonas fluorescens (strain ATCC BAA-477 / NRRL B-23932 / Pf-5).